The chain runs to 161 residues: DNA-binding protein inhibitor ID-4 (161 aa).

A bHLH domain is found at 52 to 104 (AAEAAADEPALCLQCDMNDCYSRLRRLVPTIPPNKKVSKVEILPHVIDYILDL). The disordered stretch occupies residues 116-161 (RQPPPPAPPHHPAGTCPAAPPRTPLTALNTDPAGAVNKQGDSILCR). Over residues 117–126 (QPPPPAPPHH) the composition is skewed to pro residues.

Heterodimer with other HLH proteins.

It is found in the nucleus. Its function is as follows. Transcriptional regulator (lacking a basic DNA binding domain) which negatively regulates the basic helix-loop-helix (bHLH) transcription factors by forming heterodimers and inhibiting their DNA binding and transcriptional activity. Implicated in regulating a variety of cellular processes, including cellular growth, senescence, differentiation, apoptosis, angiogenesis, and neoplastic transformation. This is DNA-binding protein inhibitor ID-4 (ID4) from Sus scrofa (Pig).